Reading from the N-terminus, the 532-residue chain is MARGEGAEQFSSGLLPTAKSVTQNEIKMVKLPKQQERKRALTVWSKVCFAIGGAPYQITGTALGFFLQIFLLDVAQLNPLNASVILFVGRAWDAVTDPTVGFLVSRTPWTRHGRMMPWILVSTIPAVLCYFLIWVVPPIEQGKMMWYLLFYCLFQTLQTCFHVPYSALTMFISTEQRERDSATAYRMTVEVFGTVVGTAIQGQIVGMANTPCKNNTSPNNSSNDLIQSNNSHIPLKSNIFDERCAYMIASAVISLIYVVCAAVLFFGVREQDVQGELKAQKRVSFQKGLRLVMGHGPYVKLVLAFLFTSLAFMLLEGNFAVFIKYTLGFREDFQNILLVIMVSATVSIPMWQWFLCRFGKKTAVYIGITWAVPFMILVVSVNSSLIVSYIVSIAAGVSVGAAFLLPWSMLPDVVDDFKLQNPTSQGHEAIFYSFYVFFTKFASGVSLGVSTLALSFAGYETGVCVQSDSVNLTLKLLVSAAPVSLIALGLLIFMTYPIDEERREYNNKQLQLLLRNEEEEDEMEVLKPDITA.

The Cytoplasmic portion of the chain corresponds to 1 to 40 (MARGEGAEQFSSGLLPTAKSVTQNEIKMVKLPKQQERKRA). The helical transmembrane segment at 41–70 (LTVWSKVCFAIGGAPYQITGTALGFFLQIF) threads the bilayer. Residues 71–81 (LLDVAQLNPLN) lie on the Extracellular side of the membrane. Residues 82–102 (ASVILFVGRAWDAVTDPTVGF) form a helical membrane-spanning segment. Topologically, residues 103–114 (LVSRTPWTRHGR) are cytoplasmic. The chain crosses the membrane as a helical span at residues 115-134 (MMPWILVSTIPAVLCYFLIW). Topologically, residues 135–144 (VVPPIEQGKM) are extracellular. The chain crosses the membrane as a helical span at residues 145–169 (MWYLLFYCLFQTLQTCFHVPYSALT). Topologically, residues 170-176 (MFISTEQ) are cytoplasmic. A helical transmembrane segment spans residues 177–208 (RERDSATAYRMTVEVFGTVVGTAIQGQIVGMA). Residues 209–232 (NTPCKNNTSPNNSSNDLIQSNNSH) lie on the Extracellular side of the membrane. The cysteines at positions 212 and 464 are disulfide-linked. Residues N214, N220, and N229 are each glycosylated (N-linked (GlcNAc...) asparagine). A helical transmembrane segment spans residues 233 to 266 (IPLKSNIFDERCAYMIASAVISLIYVVCAAVLFF). The Cytoplasmic segment spans residues 267–297 (GVREQDVQGELKAQKRVSFQKGLRLVMGHGP). The helical transmembrane segment at 298–324 (YVKLVLAFLFTSLAFMLLEGNFAVFIK) threads the bilayer. Topologically, residues 325-335 (YTLGFREDFQN) are extracellular. A helical membrane pass occupies residues 336-354 (ILLVIMVSATVSIPMWQWF). The Cytoplasmic segment spans residues 355–358 (LCRF). A helical transmembrane segment spans residues 359–380 (GKKTAVYIGITWAVPFMILVVS). The Extracellular portion of the chain corresponds to 381–383 (VNS). A helical membrane pass occupies residues 384-420 (SLIVSYIVSIAAGVSVGAAFLLPWSMLPDVVDDFKLQ). Over 421-430 (NPTSQGHEAI) the chain is Cytoplasmic. The helical transmembrane segment at 431-457 (FYSFYVFFTKFASGVSLGVSTLALSFA) threads the bilayer. The Extracellular segment spans residues 458-469 (GYETGVCVQSDS). Residues 470-493 (VNLTLKLLVSAAPVSLIALGLLIF) form a helical membrane-spanning segment. The Cytoplasmic portion of the chain corresponds to 494 to 532 (MTYPIDEERREYNNKQLQLLLRNEEEEDEMEVLKPDITA).

Belongs to the major facilitator superfamily. Expressed in the developing nervous system.

It is found in the cell membrane. The protein resides in the endoplasmic reticulum membrane. It carries out the reaction a 1-acyl-sn-glycero-3-phosphocholine(in) + Na(+)(in) = a 1-acyl-sn-glycero-3-phosphocholine(out) + Na(+)(out). The catalysed reaction is 1-(4Z,7Z,10Z,13Z,16Z,19Z-docosahexaenoyl)-sn-glycero-3-phosphocholine(in) + Na(+)(in) = 1-(4Z,7Z,10Z,13Z,16Z,19Z-docosahexaenoyl)-sn-glycero-3-phosphocholine(out) + Na(+)(out). The enzyme catalyses 1-(9Z-octadecenoyl)-sn-glycero-3-phosphocholine(in) + Na(+)(in) = 1-(9Z-octadecenoyl)-sn-glycero-3-phosphocholine(out) + Na(+)(out). It catalyses the reaction 1-hexadecanoyl-sn-glycero-3-phosphocholine(in) + Na(+)(in) = 1-hexadecanoyl-sn-glycero-3-phosphocholine(out) + Na(+)(out). It carries out the reaction a 1-acyl-sn-glycero-3-phosphoethanolamine(in) + Na(+)(in) = a 1-acyl-sn-glycero-3-phosphoethanolamine(out) + Na(+)(out). Functionally, sodium-dependent lysophosphatidylcholine (LPC) symporter, which plays an essential role for blood-brain barrier formation and function. Specifically expressed in endothelium of the blood-brain barrier of micro-vessels and transports LPC into the brain. Transport of LPC is essential because it constitutes the major mechanism by which docosahexaenoic acid (DHA), an omega-3 fatty acid that is essential for normal brain growth and cognitive function, enters the brain. Transports LPC carrying long-chain fatty acids such LPC oleate and LPC palmitate with a minimum acyl chain length of 14 carbons. Does not transport docosahexaenoic acid in unesterified fatty acid. The sequence is that of Sodium-dependent lysophosphatidylcholine symporter 1-A (mfsd2aa) from Danio rerio (Zebrafish).